The chain runs to 331 residues: Tyrosine recombinase XerD (331 aa).

The Core-binding (CB) domain occupies 8–93 (GRDGARLESF…SMRQFYRFLY (86 aa)). Residues 114 to 318 (ALPKTMSVAD…LEERLQELVQ (205 aa)) form the Tyr recombinase domain. Catalysis depends on residues R161 and K185. The span at 214-228 (QEKSKAAASQKKTDT) shows a compositional bias: basic and acidic residues. The disordered stretch occupies residues 214–239 (QEKSKAAASQKKTDTAESPWLFPSNS). Catalysis depends on residues H270, R273, and H296. The active-site O-(3'-phospho-DNA)-tyrosine intermediate is Y305.

Belongs to the 'phage' integrase family. XerD subfamily. In terms of assembly, forms a cyclic heterotetrameric complex composed of two molecules of XerC and two molecules of XerD.

The protein resides in the cytoplasm. In terms of biological role, site-specific tyrosine recombinase, which acts by catalyzing the cutting and rejoining of the recombining DNA molecules. The XerC-XerD complex is essential to convert dimers of the bacterial chromosome into monomers to permit their segregation at cell division. It also contributes to the segregational stability of plasmids. The chain is Tyrosine recombinase XerD from Agrobacterium fabrum (strain C58 / ATCC 33970) (Agrobacterium tumefaciens (strain C58)).